Here is a 431-residue protein sequence, read N- to C-terminus: Histidine--tRNA ligase (431 aa).

This sequence belongs to the class-II aminoacyl-tRNA synthetase family.

It is found in the cytoplasm. It carries out the reaction tRNA(His) + L-histidine + ATP = L-histidyl-tRNA(His) + AMP + diphosphate + H(+). This Pyrococcus horikoshii (strain ATCC 700860 / DSM 12428 / JCM 9974 / NBRC 100139 / OT-3) protein is Histidine--tRNA ligase (hisS).